Reading from the N-terminus, the 115-residue chain is Large ribosomal subunit protein bL20 (115 aa).

It belongs to the bacterial ribosomal protein bL20 family.

Functionally, binds directly to 23S ribosomal RNA and is necessary for the in vitro assembly process of the 50S ribosomal subunit. It is not involved in the protein synthesizing functions of that subunit. This is Large ribosomal subunit protein bL20 from Synechococcus sp. (strain CC9605).